Reading from the N-terminus, the 125-residue chain is Small ribosomal subunit protein eS8 (125 aa).

The tract at residues 1-35 (MQWQGRSVRKPSGGRYHTSQGKKRTEIGRAPAETH) is disordered.

This sequence belongs to the eukaryotic ribosomal protein eS8 family. Part of the 30S ribosomal subunit.

This Methanoculleus marisnigri (strain ATCC 35101 / DSM 1498 / JR1) protein is Small ribosomal subunit protein eS8.